The following is a 301-amino-acid chain: Mitochondrial thiamine pyrophosphate carrier 1 (301 aa).

3 Solcar repeats span residues 15–102 (VTPT…ISKS), 115–200 (SSAN…AREL), and 206–293 (RVPF…SLSF). The next 6 helical transmembrane spans lie at 20 to 38 (ALVAGSIAGAISRAFTAPL), 79 to 99 (VPAEILYILYGGVQFGSYSII), 121 to 141 (LIVGIGSGIVSTLVTYPFDLL), 172 to 192 (IYAGIRPAMLSVSSTTGLMFW), 207 to 227 (VPFIEAICGFIAGATSKGITF), and 252 to 272 (IFVTILKNEGVFGLYKGFGIS).

It belongs to the mitochondrial carrier (TC 2.A.29) family.

It is found in the mitochondrion inner membrane. Mitochondrial transporter that mediates uptake of thiamine pyrophosphate (ThPP) into mitochondria. This is Mitochondrial thiamine pyrophosphate carrier 1 (TPC1) from Candida albicans (strain SC5314 / ATCC MYA-2876) (Yeast).